Here is a 68-residue protein sequence, read N- to C-terminus: DNA-directed RNA polymerase subunit omega (68 aa).

It belongs to the RNA polymerase subunit omega family. As to quaternary structure, the RNAP catalytic core consists of 2 alpha, 1 beta, 1 beta' and 1 omega subunit. When a sigma factor is associated with the core the holoenzyme is formed, which can initiate transcription.

It catalyses the reaction RNA(n) + a ribonucleoside 5'-triphosphate = RNA(n+1) + diphosphate. In terms of biological role, promotes RNA polymerase assembly. Latches the N- and C-terminal regions of the beta' subunit thereby facilitating its interaction with the beta and alpha subunits. This Desulforapulum autotrophicum (strain ATCC 43914 / DSM 3382 / VKM B-1955 / HRM2) (Desulfobacterium autotrophicum) protein is DNA-directed RNA polymerase subunit omega.